The primary structure comprises 311 residues: Malate dehydrogenase (311 aa).

NAD(+) contacts are provided by residues 7-13 and Asp34; that span reads GAAGGIG. Substrate-binding residues include Arg81 and Arg87. Residues Asn94 and 117-119 each bind NAD(+); that span reads ITN. Positions 119 and 153 each coordinate substrate. Residue His177 is the Proton acceptor of the active site. Met227 lines the NAD(+) pocket.

The protein belongs to the LDH/MDH superfamily. MDH type 1 family. As to quaternary structure, homodimer.

It catalyses the reaction (S)-malate + NAD(+) = oxaloacetate + NADH + H(+). Its function is as follows. Catalyzes the reversible oxidation of malate to oxaloacetate. The sequence is that of Malate dehydrogenase from Shewanella amazonensis (strain ATCC BAA-1098 / SB2B).